The sequence spans 213 residues: ER lumen protein-retaining receptor erd-2.1 (213 aa).

Topologically, residues 1–2 are lumenal; sequence MN. A helical transmembrane segment spans residues 3–21; the sequence is LFRFTADVAHAIAIVVLLL. Topologically, residues 22 to 35 are cytoplasmic; sequence KIWKSRSCEGISGR. Residues 36-53 form a helical membrane-spanning segment; that stretch reads SQLLFALVFVTRYLDLFT. Topologically, residues 54-61 are lumenal; that stretch reads NFFSFYNT. The chain crosses the membrane as a helical span at residues 62–80; the sequence is AMKIFYLVASFGTVYLMWA. At 81 to 96 the chain is on the cytoplasmic side; sequence KFKATYDRNNDSFRIE. A helical membrane pass occupies residues 97 to 110; that stretch reads FLVIPSMILALLIN. Topologically, residues 111-117 are lumenal; sequence HEFIFME. Residues 118–137 form a helical membrane-spanning segment; the sequence is VMWTFSIYLEAVAIMPQLFM. The Cytoplasmic portion of the chain corresponds to 138–149; that stretch reads LSRTGNAETITA. Residues 150-168 traverse the membrane as a helical segment; that stretch reads HYLFALGSYRFLYILNWVY. The Lumenal segment spans residues 169-178; that stretch reads RYYTESFFDP. Residues 179–199 form a helical membrane-spanning segment; the sequence is ISVVAGIVQTVLYADFFYLYI. Residues 200 to 213 lie on the Cytoplasmic side of the membrane; sequence TRVIQSNRQFEMSA.

The protein belongs to the ERD2 family.

The protein resides in the endoplasmic reticulum membrane. Required for the retention of luminal endoplasmic reticulum proteins. Determines the specificity of the luminal ER protein retention system. Also required for normal vesicular traffic through the Golgi. This Caenorhabditis elegans protein is ER lumen protein-retaining receptor erd-2.1.